We begin with the raw amino-acid sequence, 346 residues long: Eukaryotic translation initiation factor 3 subunit I (346 aa).

WD repeat units follow at residues Gly-8 to Thr-47, Gly-50 to Ser-89, Glu-150 to Ile-189, Leu-192 to Glu-233, and Asp-289 to Lys-328.

This sequence belongs to the eIF-3 subunit I family. As to quaternary structure, component of the eukaryotic translation initiation factor 3 (eIF-3) complex.

It is found in the cytoplasm. Component of the eukaryotic translation initiation factor 3 (eIF-3) complex, which is involved in protein synthesis of a specialized repertoire of mRNAs and, together with other initiation factors, stimulates binding of mRNA and methionyl-tRNAi to the 40S ribosome. The eIF-3 complex specifically targets and initiates translation of a subset of mRNAs involved in cell proliferation. The polypeptide is Eukaryotic translation initiation factor 3 subunit I (Eremothecium gossypii (strain ATCC 10895 / CBS 109.51 / FGSC 9923 / NRRL Y-1056) (Yeast)).